We begin with the raw amino-acid sequence, 327 residues long: MVREKVKVSTRTLQWKCVESRRDSKRLYYGRFILSPLMKGQADTIGIAMRRALLGEIEGTCITRAKSENIPHDYSNIVGIQESVHEILMNLNEIVLRSNLYGTRNALICVQGPGYITARDIILPPSVEIIDNTQHIATLTEPIDLCIELKIERNRGYSLKMSNNFEDRSYPIDAVFMPVQNANHSIHSYGNGNEKQEILFLEIWTNGSLTPKEALHEASRNLINLFIPFLHVEEETFYLENNQHQVTLPFFPFHNRLVNLRKKTKELAFQYIFIDQLELPPRIYNCLKKSNIHTLLDLLNNSQEDLIKIEHFHVEDVKKILDILEKK.

An alpha N-terminal domain (alpha-NTD) region spans residues 1–233 (MVREKVKVST…NLFIPFLHVE (233 aa)). The alpha C-terminal domain (alpha-CTD) stretch occupies residues 264–327 (TKELAFQYIF…KKILDILEKK (64 aa)).

It belongs to the RNA polymerase alpha chain family. In plastids the minimal PEP RNA polymerase catalytic core is composed of four subunits: alpha, beta, beta', and beta''. When a (nuclear-encoded) sigma factor is associated with the core the holoenzyme is formed, which can initiate transcription.

The protein resides in the plastid. The protein localises to the chloroplast. It carries out the reaction RNA(n) + a ribonucleoside 5'-triphosphate = RNA(n+1) + diphosphate. DNA-dependent RNA polymerase catalyzes the transcription of DNA into RNA using the four ribonucleoside triphosphates as substrates. The protein is DNA-directed RNA polymerase subunit alpha of Capsella bursa-pastoris (Shepherd's purse).